We begin with the raw amino-acid sequence, 393 residues long: Dihydrolipoyllysine-residue succinyltransferase component of 2-oxoglutarate dehydrogenase complex (393 aa).

The Lipoyl-binding domain maps to Arg3–Val78. Lys44 bears the N6-lipoyllysine mark. Active-site residues include His364 and Asp368.

This sequence belongs to the 2-oxoacid dehydrogenase family. As to quaternary structure, forms a 24-polypeptide structural core with octahedral symmetry. Part of the 2-oxoglutarate dehydrogenase (OGDH) complex composed of E1 (2-oxoglutarate dehydrogenase), E2 (dihydrolipoamide succinyltransferase) and E3 (dihydrolipoamide dehydrogenase); the complex contains multiple copies of the three enzymatic components (E1, E2 and E3). The cofactor is (R)-lipoate.

It catalyses the reaction N(6)-[(R)-dihydrolipoyl]-L-lysyl-[protein] + succinyl-CoA = N(6)-[(R)-S(8)-succinyldihydrolipoyl]-L-lysyl-[protein] + CoA. The protein operates within amino-acid degradation; L-lysine degradation via saccharopine pathway; glutaryl-CoA from L-lysine: step 6/6. Its function is as follows. E2 component of the 2-oxoglutarate dehydrogenase (OGDH) complex which catalyzes the second step in the conversion of 2-oxoglutarate to succinyl-CoA and CO(2). The chain is Dihydrolipoyllysine-residue succinyltransferase component of 2-oxoglutarate dehydrogenase complex (sucB) from Buchnera aphidicola subsp. Schizaphis graminum (strain Sg).